The following is a 206-amino-acid chain: Ribosomal RNA large subunit methyltransferase E (206 aa).

5 residues coordinate S-adenosyl-L-methionine: glycine 54, tryptophan 56, aspartate 76, aspartate 94, and aspartate 118. Lysine 158 serves as the catalytic Proton acceptor.

This sequence belongs to the class I-like SAM-binding methyltransferase superfamily. RNA methyltransferase RlmE family.

It is found in the cytoplasm. The catalysed reaction is uridine(2552) in 23S rRNA + S-adenosyl-L-methionine = 2'-O-methyluridine(2552) in 23S rRNA + S-adenosyl-L-homocysteine + H(+). Functionally, specifically methylates the uridine in position 2552 of 23S rRNA at the 2'-O position of the ribose in the fully assembled 50S ribosomal subunit. This is Ribosomal RNA large subunit methyltransferase E from Methanosphaera stadtmanae (strain ATCC 43021 / DSM 3091 / JCM 11832 / MCB-3).